Reading from the N-terminus, the 935-residue chain is Auxin response factor 6 (935 aa).

A DNA-binding region (TF-B3) is located at residues 129 to 231; the sequence is FCKTLTASDT…QLLLGIRRAN (103 aa). Disordered regions lie at residues 536–624 and 645–714; these read QAYL…PLHT and SAMT…SASD. 2 stretches are compositionally biased toward low complexity: residues 546–565 and 573–582; these read QPQSQAQSQSNNHLSQQQQQ and SASSAAVVSA. 2 stretches are compositionally biased toward polar residues: residues 583-624 and 661-689; these read MSQF…PLHT and SSFQHSGAGNNNTQSVLEQLGQSHTSNVP. In terms of domain architecture, PB1 spans 796-880; the sequence is NTFVKVYKSG…WCIKILSPQE (85 aa). Over residues 896–909 the composition is skewed to polar residues; the sequence is PSSNNVDKLPSNGN. The tract at residues 896 to 917 is disordered; that stretch reads PSSNNVDKLPSNGNCDDFGNRS.

It belongs to the ARF family. Homodimers and heterodimers. Expressed in the whole plant.

It is found in the nucleus. In terms of biological role, auxin response factors (ARFs) are transcriptional factors that bind specifically to the DNA sequence 5'-TGTCTC-3' found in the auxin-responsive promoter elements (AuxREs). Seems to act as transcriptional activator. Formation of heterodimers with Aux/IAA proteins may alter their ability to modulate early auxin response genes expression. Regulates both stamen and gynoecium maturation. Promotes jasmonic acid production. Partially redundant with ARF8. The sequence is that of Auxin response factor 6 (ARF6) from Arabidopsis thaliana (Mouse-ear cress).